The following is a 355-amino-acid chain: Acyl-CoA desaturase 1 (355 aa).

At 1–68 (MPAHMLQEIS…EGPPPKLEYV (68 aa)) the chain is on the cytoplasmic side. The span at 9 to 20 (ISSSYTTTTTIT) shows a compositional bias: low complexity. A disordered region spans residues 9–33 (ISSSYTTTTTITAPPSGNEREKVKT). The chain crosses the membrane as a helical span at residues 69–89 (WRNIILMVLLHLGGLYGIILV). Residue Asn71 participates in substrate binding. Topologically, residues 90–93 (PSCK) are lumenal. Residues 94–114 (LYTCLFGIFYYMTSALGITAG) traverse the membrane as a helical segment. Residues 115–213 (AHRLWSHRTY…EKLVMFQRRY (99 aa)) lie on the Cytoplasmic side of the membrane. Residues His116 and His121 each coordinate Fe cation. Positions 116-121 (HRLWSH) match the Histidine box-1 motif. Residues Asn144, Arg151, and Asp152 each coordinate substrate. The Fe cation site is built by His153, His156, and His157. The Histidine box-2 signature appears at 153 to 157 (HRAHH). Substrate-binding residues include Arg184 and Lys185. The helical transmembrane segment at 214 to 233 (YKPGLLLMCFILPTLVPWYC) threads the bilayer. Topologically, residues 234 to 237 (WGET) are lumenal. The helical transmembrane segment at 238–259 (FVNSLFVSTFLRYTLVLNATWL) threads the bilayer. Trp258 contributes to the substrate binding site. Residues 260–355 (VNSAAHLYGY…RTGDGSHKSS (96 aa)) are Cytoplasmic-facing. Residues His265, His294, His297, and His298 each coordinate Fe cation. The short motif at 294 to 298 (HNYHH) is the Histidine box-3 element.

This sequence belongs to the fatty acid desaturase type 1 family. Fe(2+) is required as a cofactor. In terms of tissue distribution, detected in liver (at protein level). Detected in skin and liver. Detected in sebaceous gland, but not in hair follicle. Detected in white and brown adipose tissue, eyelid, Harderian gland, and at lower levels in Meibomian gland, eyeball and adrenal gland. Highly expressed in liver, and detected at low levels in brain, heart, lung, stomach, skeletal muscle and kidney.

It is found in the endoplasmic reticulum membrane. Its subcellular location is the microsome membrane. It catalyses the reaction octadecanoyl-CoA + 2 Fe(II)-[cytochrome b5] + O2 + 2 H(+) = (9Z)-octadecenoyl-CoA + 2 Fe(III)-[cytochrome b5] + 2 H2O. In terms of biological role, stearoyl-CoA desaturase that utilizes O(2) and electrons from reduced cytochrome b5 to introduce the first double bond into saturated fatty acyl-CoA substrates. Catalyzes the insertion of a cis double bond at the Delta-9 position into fatty acyl-CoA substrates including palmitoyl-CoA and stearoyl-CoA. Gives rise to a mixture of 16:1 and 18:1 unsaturated fatty acids. Plays an important role in lipid biosynthesis. Plays an important role in regulating the expression of genes that are involved in lipogenesis and in regulating mitochondrial fatty acid oxidation. Plays an important role in body energy homeostasis. Contributes to the biosynthesis of membrane phospholipids, cholesterol esters and triglycerides. Required for normal development of sebaceous glands. Required for the biosynthesis of normal levels of Delta-9 unsaturated fatty acids and 1-alkyl-2,3-diacylglycerol in the Harderian gland. Required for normal production of meibum, an oily material that prevents drying of the cornea. In Mus musculus (Mouse), this protein is Acyl-CoA desaturase 1 (Scd1).